Consider the following 472-residue polypeptide: UDP-glucosyltransferase 103 (472 aa).

His15 acts as the Proton acceptor in catalysis. Residue His15 participates in an anthocyanidin binding. Residue Asp117 is the Charge relay of the active site. Positions 344, 346, 361, 364, 365, 366, and 369 each coordinate UDP-alpha-D-glucose. Position 384 (Gly384) interacts with an anthocyanidin. The UDP-alpha-D-glucose site is built by Glu385 and Gln386.

Belongs to the UDP-glycosyltransferase family.

The catalysed reaction is (20S)-ginsenoside F1 + UDP-alpha-D-glucose = (20S)-ginsenoside Rg1 + UDP + H(+). It functions in the pathway secondary metabolite biosynthesis; terpenoid biosynthesis. Functionally, probable component of the triterpene saponins (e.g. ginsenosides) biosynthetic pathway. No detectable activity toward protopanaxatriol (PPT). The protein is UDP-glucosyltransferase 103 of Panax ginseng (Korean ginseng).